A 431-amino-acid polypeptide reads, in one-letter code: Histidinol dehydrogenase (431 aa).

Positions 127, 189, and 212 each coordinate NAD(+). Substrate contacts are provided by S237, Q259, and H262. The Zn(2+) site is built by Q259 and H262. Residues E326 and H327 each act as proton acceptor in the active site. Residues H327, D360, E414, and H419 each contribute to the substrate site. A Zn(2+)-binding site is contributed by D360. Position 419 (H419) interacts with Zn(2+).

It belongs to the histidinol dehydrogenase family. Zn(2+) serves as cofactor.

The catalysed reaction is L-histidinol + 2 NAD(+) + H2O = L-histidine + 2 NADH + 3 H(+). Its pathway is amino-acid biosynthesis; L-histidine biosynthesis; L-histidine from 5-phospho-alpha-D-ribose 1-diphosphate: step 9/9. In terms of biological role, catalyzes the sequential NAD-dependent oxidations of L-histidinol to L-histidinaldehyde and then to L-histidine. The protein is Histidinol dehydrogenase of Xanthomonas euvesicatoria pv. vesicatoria (strain 85-10) (Xanthomonas campestris pv. vesicatoria).